The chain runs to 492 residues: Transcript termination protein OPG145 (492 aa).

Residues 100–256 (MIELKRPLYI…NSIINIAKLS (157 aa)) enclose the Helicase ATP-binding domain. 113 to 120 (LACGFGKT) contributes to the ATP binding site. Residues 206–209 (DESH) carry the DEAH box motif.

It belongs to the helicase family. Poxviruses subfamily. As to quaternary structure, interacts with OPG087. Might be part of a transcription complex composed at least of OPG087, OPG110, and OPG145.

It is found in the virion. In terms of biological role, DNA helicase which seems to act as a postreplicative transcription termination factor. Involved in ATP-dependent release of nascent RNA. Forms a stable complex with single-stranded DNA, and to a lesser extent RNA. This Cynomys gunnisoni (Gunnison's prairie dog) protein is Transcript termination protein OPG145 (OPG145).